We begin with the raw amino-acid sequence, 264 residues long: Thiazole synthase (264 aa).

The Schiff-base intermediate with DXP role is filled by K101. 1-deoxy-D-xylulose 5-phosphate contacts are provided by residues G162, 189–190 (AG), and 211–212 (NT). Residues 245 to 264 (KRQTASPSTPTLGQPFWHNQ) are disordered.

The protein belongs to the ThiG family. In terms of assembly, homotetramer. Forms heterodimers with either ThiH or ThiS.

The protein resides in the cytoplasm. The enzyme catalyses [ThiS sulfur-carrier protein]-C-terminal-Gly-aminoethanethioate + 2-iminoacetate + 1-deoxy-D-xylulose 5-phosphate = [ThiS sulfur-carrier protein]-C-terminal Gly-Gly + 2-[(2R,5Z)-2-carboxy-4-methylthiazol-5(2H)-ylidene]ethyl phosphate + 2 H2O + H(+). It functions in the pathway cofactor biosynthesis; thiamine diphosphate biosynthesis. In terms of biological role, catalyzes the rearrangement of 1-deoxy-D-xylulose 5-phosphate (DXP) to produce the thiazole phosphate moiety of thiamine. Sulfur is provided by the thiocarboxylate moiety of the carrier protein ThiS. In vitro, sulfur can be provided by H(2)S. This is Thiazole synthase from Cellvibrio japonicus (strain Ueda107) (Pseudomonas fluorescens subsp. cellulosa).